Consider the following 210-residue polypeptide: Neurotrophin-4 (210 aa).

The signal sequence occupies residues 1–24 (MLPLPSCSLPILLLFLLPSVPIES). A propeptide spanning residues 25-80 (QPPPSTLPPFLAPEWDLLSPRVVLSRGAPAGPPLLFLLEAGAFRESAGAPANRSRR) is cleaved from the precursor. An N-linked (GlcNAc...) asparagine glycan is attached at asparagine 76. 3 disulfides stabilise this stretch: cysteine 97–cysteine 170, cysteine 141–cysteine 199, and cysteine 158–cysteine 201.

This sequence belongs to the NGF-beta family. In terms of tissue distribution, highest levels in prostate, lower levels in thymus, placenta, and skeletal muscle. Expressed in embryonic and adult tissues.

Its subcellular location is the secreted. In terms of biological role, target-derived survival factor for peripheral sensory sympathetic neurons. May promote ameloblast differentiation and subsequent reduction in proliferation of ameloblasts. The protein is Neurotrophin-4 (NTF4) of Homo sapiens (Human).